Here is a 377-residue protein sequence, read N- to C-terminus: Bacterial actin-related protein (377 aa).

Belongs to the actin family.

Its function is as follows. May be a dominant-negative inhibitor of eukaryotic actin polymerization. The sequence is that of Bacterial actin-related protein (barP) from Haliangium ochraceum (strain DSM 14365 / JCM 11303 / SMP-2).